A 108-amino-acid polypeptide reads, in one-letter code: Tetrahydromethanopterin S-methyltransferase subunit B (108 aa).

The chain crosses the membrane as a helical span at residues 81 to 101 (FFGFWISLSILTLGLILVIGL).

It belongs to the MtrB family. As to quaternary structure, the complex is composed of 8 subunits; MtrA, MtrB, MtrC, MtrD, MtrE, MtrF, MtrG and MtrH.

It localises to the cell membrane. It catalyses the reaction 5-methyl-5,6,7,8-tetrahydromethanopterin + coenzyme M + 2 Na(+)(in) = 5,6,7,8-tetrahydromethanopterin + methyl-coenzyme M + 2 Na(+)(out). It participates in one-carbon metabolism; methanogenesis from CO(2); methyl-coenzyme M from 5,10-methylene-5,6,7,8-tetrahydromethanopterin: step 2/2. Its function is as follows. Part of a complex that catalyzes the formation of methyl-coenzyme M and tetrahydromethanopterin from coenzyme M and methyl-tetrahydromethanopterin. This is an energy-conserving, sodium-ion translocating step. The sequence is that of Tetrahydromethanopterin S-methyltransferase subunit B from Methanococcus aeolicus (strain ATCC BAA-1280 / DSM 17508 / OCM 812 / Nankai-3).